Here is a 400-residue protein sequence, read N- to C-terminus: S-adenosylmethionine synthase (400 aa).

Position 17 (H17) interacts with ATP. D19 is a binding site for Mg(2+). E45 is a K(+) binding site. The L-methionine site is built by E58 and Q101. The interval Q101–Q111 is flexible loop. ATP is bound by residues D177 to K179, R244 to F245, D253, R259 to K260, A276, and K280. D253 is an L-methionine binding site. An L-methionine-binding site is contributed by K284.

It belongs to the AdoMet synthase family. In terms of assembly, homotetramer; dimer of dimers. It depends on Mg(2+) as a cofactor. K(+) serves as cofactor.

Its subcellular location is the cytoplasm. It carries out the reaction L-methionine + ATP + H2O = S-adenosyl-L-methionine + phosphate + diphosphate. It participates in amino-acid biosynthesis; S-adenosyl-L-methionine biosynthesis; S-adenosyl-L-methionine from L-methionine: step 1/1. In terms of biological role, catalyzes the formation of S-adenosylmethionine (AdoMet) from methionine and ATP. The overall synthetic reaction is composed of two sequential steps, AdoMet formation and the subsequent tripolyphosphate hydrolysis which occurs prior to release of AdoMet from the enzyme. This chain is S-adenosylmethionine synthase, found in Bacillus licheniformis (strain ATCC 14580 / DSM 13 / JCM 2505 / CCUG 7422 / NBRC 12200 / NCIMB 9375 / NCTC 10341 / NRRL NRS-1264 / Gibson 46).